The primary structure comprises 151 residues: Ribosome maturation factor RimP (151 aa).

It belongs to the RimP family.

The protein localises to the cytoplasm. In terms of biological role, required for maturation of 30S ribosomal subunits. The sequence is that of Ribosome maturation factor RimP from Caldicellulosiruptor bescii (strain ATCC BAA-1888 / DSM 6725 / KCTC 15123 / Z-1320) (Anaerocellum thermophilum).